The chain runs to 855 residues: Alanine--tRNA ligase (855 aa).

The Zn(2+) site is built by H555, H559, C657, and H661.

It belongs to the class-II aminoacyl-tRNA synthetase family. Zn(2+) is required as a cofactor.

Its subcellular location is the cytoplasm. It catalyses the reaction tRNA(Ala) + L-alanine + ATP = L-alanyl-tRNA(Ala) + AMP + diphosphate. Its function is as follows. Catalyzes the attachment of alanine to tRNA(Ala) in a two-step reaction: alanine is first activated by ATP to form Ala-AMP and then transferred to the acceptor end of tRNA(Ala). Also edits incorrectly charged Ser-tRNA(Ala) and Gly-tRNA(Ala) via its editing domain. The chain is Alanine--tRNA ligase from Wolinella succinogenes (strain ATCC 29543 / DSM 1740 / CCUG 13145 / JCM 31913 / LMG 7466 / NCTC 11488 / FDC 602W) (Vibrio succinogenes).